A 274-amino-acid chain; its full sequence is 2,3,4,5-tetrahydropyridine-2,6-dicarboxylate N-succinyltransferase (274 aa).

Positions 104 and 141 each coordinate substrate.

The protein belongs to the transferase hexapeptide repeat family. In terms of assembly, homotrimer.

Its subcellular location is the cytoplasm. The catalysed reaction is (S)-2,3,4,5-tetrahydrodipicolinate + succinyl-CoA + H2O = (S)-2-succinylamino-6-oxoheptanedioate + CoA. It functions in the pathway amino-acid biosynthesis; L-lysine biosynthesis via DAP pathway; LL-2,6-diaminopimelate from (S)-tetrahydrodipicolinate (succinylase route): step 1/3. The polypeptide is 2,3,4,5-tetrahydropyridine-2,6-dicarboxylate N-succinyltransferase (Shewanella baltica (strain OS155 / ATCC BAA-1091)).